The primary structure comprises 385 residues: Neuropeptide Y receptor type 2 (385 aa).

The Extracellular segment spans residues 1 to 54; it reads MGPLEAIGEENQTDEMKMELFTKLYLPRYTTPVSELALDPKPELKDSTTLVEVQ. Asparagine 11 is a glycosylation site (N-linked (GlcNAc...) asparagine). Residues 55–75 form a helical membrane-spanning segment; sequence IILIFAYCSIILLGVIGNSLV. Topologically, residues 76–90 are cytoplasmic; that stretch reads IHVIIKFKSMRTVTN. Residues 91-111 form a helical membrane-spanning segment; that stretch reads FFIANLAVADLLVNTLCLPFT. At 112-128 the chain is on the extracellular side; it reads LVYTLLGEWKLGPVLCH. Cysteines 127 and 207 form a disulfide. The chain crosses the membrane as a helical span at residues 129 to 149; it reads LVPYAQALAVHVSTVTLTVIA. The Cytoplasmic portion of the chain corresponds to 150-169; sequence LDRHRCIVYHLESKISKRIS. Residues 170-190 form a helical membrane-spanning segment; that stretch reads FLIIGVAWAVSALLASPLAIF. The Extracellular segment spans residues 191–221; it reads REYSLIEIIPDFKIVVCSEKWPGEGQLNYGT. A helical transmembrane segment spans residues 222–242; that stretch reads IYSVSMLLIQYVLPLAIISYA. Topologically, residues 243–273 are cytoplasmic; it reads YTRIWTKLKNHVSPGAGNDHYHHRRQKTTKM. A helical membrane pass occupies residues 274–294; it reads LVCVVVVFAVSWLPFHAFQLV. Residues 295-308 lie on the Extracellular side of the membrane; sequence SDIDSQVLDLKEYK. Residues 309 to 329 form a helical membrane-spanning segment; that stretch reads LIYTVFHVIAMCSTFANPLLY. Residues 330-385 lie on the Cytoplasmic side of the membrane; it reads GWMNNNYRTAFLTAFQCEQRLDSIHPEVSAAFKARKKLEAKKSQFPGDSFTQPTNV. Cysteine 346 carries the S-palmitoyl cysteine lipid modification.

This sequence belongs to the G-protein coupled receptor 1 family.

It is found in the cell membrane. Receptor for neuropeptide Y and peptide YY. The protein is Neuropeptide Y receptor type 2 (NPY2R) of Gallus gallus (Chicken).